The following is a 189-amino-acid chain: uncharacterized protein (189 aa).

A compositionally biased stretch (basic and acidic residues) spans 1-15 (MDKHGVKTPLWRKEV). The interval 1–77 (MDKHGVKTPL…SPLRQESSSQ (77 aa)) is disordered. Composition is skewed to acidic residues over residues 16–29 (EDPEAREEDLEDDS) and 46–56 (SATETEEDSRD). Polar residues predominate over residues 65-77 (VSYSPLRQESSSQ).

This is an uncharacterized protein from Mus musculus (Mouse).